The primary structure comprises 210 residues: uncharacterized protein (210 aa).

A run of 5 helical transmembrane segments spans residues 42–62 (ITLG…VLFV), 66–86 (ALHG…GFLM), 126–146 (VVVY…EMWQ), 147–167 (IILA…VISL), and 189–209 (AGIV…NEII).

The protein belongs to the Rht family.

The protein localises to the cell membrane. This is an uncharacterized protein from Haemophilus influenzae (strain ATCC 51907 / DSM 11121 / KW20 / Rd).